The chain runs to 90 residues: MIKTKEVTFVTILIVLCVFISTIHAKRYIEYPIRLDLGKGCDPRFPTAACYKRTPANPYRRPCTTANRCRRSTSSTRVPSLKTFVEIPPM.

Positions 1–25 (MIKTKEVTFVTILIVLCVFISTIHA) are cleaved as a signal peptide. 2 disulfide bridges follow: cysteine 41–cysteine 50 and cysteine 63–cysteine 69.

Belongs to the plant rapid alkalinization factor (RALF) family.

The protein localises to the secreted. Cell signaling peptide that may regulate plant stress, growth, and development. Mediates a rapid alkalinization of extracellular space by mediating a transient increase in the cytoplasmic Ca(2+) concentration leading to a calcium-dependent signaling events through a cell surface receptor and a concomitant activation of some intracellular mitogen-activated protein kinases. The protein is Protein RALF-like 29 (RALFL29) of Arabidopsis thaliana (Mouse-ear cress).